Reading from the N-terminus, the 241-residue chain is Phycocyanobilin:ferredoxin oxidoreductase (241 aa).

The protein belongs to the HY2 family.

It catalyses the reaction (2R,3Z)-phycocyanobilin + 4 oxidized [2Fe-2S]-[ferredoxin] = biliverdin IXalpha + 4 reduced [2Fe-2S]-[ferredoxin] + 4 H(+). Catalyzes the four-electron reduction of biliverdin IX-alpha (2-electron reduction at both the A and D rings); the reaction proceeds via an isolatable 2-electron intermediate, 181,182-dihydrobiliverdin. This chain is Phycocyanobilin:ferredoxin oxidoreductase, found in Prochlorococcus marinus (strain MIT 9515).